Reading from the N-terminus, the 400-residue chain is Forkhead box protein Q1 (400 aa).

The disordered stretch occupies residues 1 to 112; that stretch reads MKLEVFVPRA…EGARSKPYTR (112 aa). Low complexity predominate over residues 32–54; it reads LSAAGDDSLGSDGDCAANSPAAG. Composition is skewed to gly residues over residues 55-66 and 95-104; these read SGAGDLEGGGGE and CAGGVGGGEG. A DNA-binding region (fork-head) is located at residues 115-210; it reads KPPYSYIALI…ADGVFRRRRK (96 aa). The disordered stretch occupies residues 213-264; the sequence is SHRTTVSASGLRPEEAPPGPAGTPQPAPAARSSPIARSPARQEERSSPASKF. Residues 228 to 239 are compositionally biased toward pro residues; it reads APPGPAGTPQPA. The segment covering 240-251 has biased composition (low complexity); it reads PAARSSPIARSP.

As to expression, expressed in kidney and stomach. Expression in the outer medulla of the kidney and the transitional epithelium. Expressed in the hair follicle medulla.

The protein resides in the nucleus. Its function is as follows. Plays a role in hair follicle differentiation. This Mus musculus (Mouse) protein is Forkhead box protein Q1 (Foxq1).